The primary structure comprises 93 residues: Small ribosomal subunit protein uS19 (93 aa).

This sequence belongs to the universal ribosomal protein uS19 family.

Functionally, protein S19 forms a complex with S13 that binds strongly to the 16S ribosomal RNA. The protein is Small ribosomal subunit protein uS19 of Thermoanaerobacter pseudethanolicus (strain ATCC 33223 / 39E) (Clostridium thermohydrosulfuricum).